We begin with the raw amino-acid sequence, 439 residues long: ATP-dependent protease ATPase subunit HslU (439 aa).

ATP is bound by residues Ile-17, 59–64 (GVGKTE), Asp-251, Glu-317, and Arg-389.

It belongs to the ClpX chaperone family. HslU subfamily. In terms of assembly, a double ring-shaped homohexamer of HslV is capped on each side by a ring-shaped HslU homohexamer. The assembly of the HslU/HslV complex is dependent on binding of ATP.

The protein resides in the cytoplasm. Functionally, ATPase subunit of a proteasome-like degradation complex; this subunit has chaperone activity. The binding of ATP and its subsequent hydrolysis by HslU are essential for unfolding of protein substrates subsequently hydrolyzed by HslV. HslU recognizes the N-terminal part of its protein substrates and unfolds these before they are guided to HslV for hydrolysis. The sequence is that of ATP-dependent protease ATPase subunit HslU from Campylobacter jejuni subsp. jejuni serotype O:6 (strain 81116 / NCTC 11828).